The sequence spans 282 residues: Serine/arginine-rich splicing factor 8 (282 aa).

At S2 the chain carries N-acetylserine. Phosphoserine occurs at positions 2 and 26. Residues 14–92 enclose the RRM domain; it reads ITLKVDNLTY…RELRVQVARY (79 aa). Residues 91–282 are disordered; that stretch reads RYGRRDLPRS…SPEEEGQMSS (192 aa). Residues 93-107 are compositionally biased toward basic and acidic residues; it reads GRRDLPRSRQGEPRG. 2 stretches are compositionally biased toward basic residues: residues 116 to 136 and 144 to 154; these read RRSR…RSRS and SRSRSRYRGSR. 2 stretches are compositionally biased toward low complexity: residues 155–177 and 185–200; these read YSRS…PYSR and YGGS…NSRY. 5 positions are modified to phosphoserine: S156, S158, S171, S173, and S196. Over residues 201–210 the composition is skewed to basic residues; the sequence is SRYHSSRSHS. Composition is skewed to low complexity over residues 211–227 and 234–255; these read KSGS…SKSS and SSSV…SPPR. Basic residues predominate over residues 256–271; it reads VSKRKSKSRSRSKRPP. Residue S273 is modified to Phosphoserine.

This sequence belongs to the splicing factor SR family. As to expression, strongly expressed in pancreas, spleen and prostate. Weakly expressed in lung, liver and thymus.

The protein resides in the nucleus. In terms of biological role, involved in pre-mRNA alternative splicing. The sequence is that of Serine/arginine-rich splicing factor 8 (SRSF8) from Homo sapiens (Human).